The primary structure comprises 93 residues: Large ribosomal subunit protein uL23cz/uL23cy (93 aa).

The protein belongs to the universal ribosomal protein uL23 family. Part of the 50S ribosomal subunit.

The protein localises to the plastid. It localises to the chloroplast. In terms of biological role, binds to 23S rRNA. The protein is Large ribosomal subunit protein uL23cz/uL23cy (rpl23-A) of Jasminum nudiflorum (Winter jasmine).